We begin with the raw amino-acid sequence, 529 residues long: Ectonucleoside triphosphate diphosphohydrolase 3 (529 aa).

Residues 1–22 are Cytoplasmic-facing; it reads MFTVLTRQPCEQAGLKALYRTP. Residues 23–43 form a helical membrane-spanning segment; sequence TIIALVVLLVSIVVLVSITVI. Residues 44 to 485 are Extracellular-facing; it reads QIHKQEVLPP…PLIRLPIEPP (442 aa). Asn-81 carries N-linked (GlcNAc...) asparagine glycosylation. A disulfide bridge connects residues Cys-92 and Cys-116. Asn-149 carries an N-linked (GlcNAc...) asparagine glycan. Glu-182 serves as the catalytic Proton acceptor. 222–226 is an ATP binding site; the sequence is GASTQ. N-linked (GlcNAc...) asparagine glycosylation is present at Asn-238. 3 disulfide bridges follow: Cys-261-Cys-308, Cys-289-Cys-334, and Cys-347-Cys-353. 4 N-linked (GlcNAc...) asparagine glycosylation sites follow: Asn-381, Asn-392, Asn-402, and Asn-454. An intrachain disulfide couples Cys-399 to Cys-422. The helical transmembrane segment at 486-506 threads the bilayer; sequence VFVGTLAFFTAAALLCLAFLA. Residues 507–529 are Cytoplasmic-facing; the sequence is YLCSATRRKRHSEHAFDHAVDSD.

It belongs to the GDA1/CD39 NTPase family. Requires Ca(2+) as cofactor. The cofactor is Mg(2+). In terms of tissue distribution, expressed in adult brain, pancreas, spleen and prostate. Moderate or low expression is seen in most tissues. Not expressed in liver and peripheral blood leukocytes.

It localises to the cell membrane. It carries out the reaction a ribonucleoside 5'-triphosphate + 2 H2O = a ribonucleoside 5'-phosphate + 2 phosphate + 2 H(+). Functionally, has a threefold preference for the hydrolysis of ATP over ADP. The polypeptide is Ectonucleoside triphosphate diphosphohydrolase 3 (ENTPD3) (Homo sapiens (Human)).